The following is a 379-amino-acid chain: Dual-specificity RNA methyltransferase RlmN (379 aa).

The active-site Proton acceptor is Glu-96. The Radical SAM core domain maps to 102–342 (TDDRGTLCVS…TRTTRGDDID (241 aa)). Residues Cys-109 and Cys-345 are joined by a disulfide bond. [4Fe-4S] cluster is bound by residues Cys-116, Cys-120, and Cys-123. S-adenosyl-L-methionine contacts are provided by residues 170–171 (GE), Ser-202, 224–226 (SLH), and Asn-302. Cys-345 functions as the S-methylcysteine intermediate in the catalytic mechanism.

Belongs to the radical SAM superfamily. RlmN family. [4Fe-4S] cluster serves as cofactor.

It is found in the cytoplasm. It catalyses the reaction adenosine(2503) in 23S rRNA + 2 reduced [2Fe-2S]-[ferredoxin] + 2 S-adenosyl-L-methionine = 2-methyladenosine(2503) in 23S rRNA + 5'-deoxyadenosine + L-methionine + 2 oxidized [2Fe-2S]-[ferredoxin] + S-adenosyl-L-homocysteine. The enzyme catalyses adenosine(37) in tRNA + 2 reduced [2Fe-2S]-[ferredoxin] + 2 S-adenosyl-L-methionine = 2-methyladenosine(37) in tRNA + 5'-deoxyadenosine + L-methionine + 2 oxidized [2Fe-2S]-[ferredoxin] + S-adenosyl-L-homocysteine. In terms of biological role, specifically methylates position 2 of adenine 2503 in 23S rRNA and position 2 of adenine 37 in tRNAs. m2A2503 modification seems to play a crucial role in the proofreading step occurring at the peptidyl transferase center and thus would serve to optimize ribosomal fidelity. The protein is Dual-specificity RNA methyltransferase RlmN of Pseudomonas entomophila (strain L48).